Consider the following 127-residue polypeptide: Large ribosomal subunit protein bL17 (127 aa).

Belongs to the bacterial ribosomal protein bL17 family. As to quaternary structure, part of the 50S ribosomal subunit. Contacts protein L32.

The protein is Large ribosomal subunit protein bL17 of Xanthomonas euvesicatoria pv. vesicatoria (strain 85-10) (Xanthomonas campestris pv. vesicatoria).